The sequence spans 103 residues: Histone H4 (103 aa).

Over residues 1 to 14 (MSGRGKGGKGLGKG) the composition is skewed to gly residues. Positions 1–20 (MSGRGKGGKGLGKGGAKRHR) are disordered. Residues 17–21 (KRHRK) mediate DNA binding.

It belongs to the histone H4 family. As to quaternary structure, the nucleosome is a histone octamer containing two molecules each of H2A, H2B, H3 and H4 assembled in one H3-H4 heterotetramer and two H2A-H2B heterodimers. The octamer wraps approximately 147 bp of DNA.

The protein resides in the nucleus. Its subcellular location is the chromosome. Its function is as follows. Core component of nucleosome. Nucleosomes wrap and compact DNA into chromatin, limiting DNA accessibility to the cellular machineries which require DNA as a template. Histones thereby play a central role in transcription regulation, DNA repair, DNA replication and chromosomal stability. DNA accessibility is regulated via a complex set of post-translational modifications of histones, also called histone code, and nucleosome remodeling. This is Histone H4 (H4-I) from Volvox carteri (Green alga).